A 307-amino-acid polypeptide reads, in one-letter code: UAP56-interacting factor (307 aa).

Over residues 1 to 25 (MSGFGAAALLSGSSAAAGTRSGSSD) the composition is skewed to low complexity. Disordered regions lie at residues 1 to 28 (MSGF…DSLE) and 41 to 85 (NKKE…KNHL). The short motif at 26 to 44 (SLEKIDMSLDDIIKLNKKE) is the UAP56-binding motif element. The segment covering 57-78 (LQQNRTQQFRTPGSKWGIQQQK) has biased composition (polar residues).

It belongs to the UIF family. Widely expressed.

The protein localises to the nucleus. It is found in the nucleoplasm. It localises to the nucleus speckle. Functionally, required for mRNA export from the nucleus to the cytoplasm. Acts as an adapter that uses the DDX39B/UAP56-NFX1 pathway to ensure efficient mRNA export and delivering to the nuclear pore. In Gallus gallus (Chicken), this protein is UAP56-interacting factor (FYTTD1).